The sequence spans 193 residues: Thymidylate kinase (193 aa).

ATP is bound at residue 7–14; it reads GIDGCGKS.

This sequence belongs to the thymidylate kinase family.

The enzyme catalyses dTMP + ATP = dTDP + ADP. Functionally, phosphorylation of dTMP to form dTDP in both de novo and salvage pathways of dTTP synthesis. The protein is Thymidylate kinase of Coprothermobacter proteolyticus (strain ATCC 35245 / DSM 5265 / OCM 4 / BT).